The sequence spans 691 residues: Probable E3 ubiquitin-protein ligase RHG1A (691 aa).

Disordered regions lie at residues 71–91 (SLGEASSSGTKDEASSHNEQR), 151–235 (GPGT…PRGM), 316–336 (SFVVSRNPNSTPVSIPPGSRT), 349–373 (VGGTSNSTAPVERNLHLDETRSRSI), and 395–501 (QSSR…MHNR). Basic and acidic residues predominate over residues 80–91 (TKDEASSHNEQR). Polar residues-rich tracts occupy residues 204 to 213 (GESSSWTPGS) and 317 to 328 (FVVSRNPNSTPV). The segment covering 361 to 370 (RNLHLDETRS) has biased composition (basic and acidic residues). Positions 395-406 (QSSRNVTNGNLN) are enriched in polar residues. Over residues 407-419 (SASSVSRTGSTTS) the composition is skewed to low complexity. The span at 429–440 (NLAWTSYQNSPH) shows a compositional bias: polar residues. The span at 454-465 (RSLLSSLAADAT) shows a compositional bias: low complexity. Residues 637 to 678 (CCVCQEEYTEGEDMGTLECGHEFHSQCIKEWLKQKNLCPICK) form an RING-type; atypical zinc finger.

As to expression, expressed in stems, flowers, green siliques, cauline leaves, seeds and roots.

It carries out the reaction S-ubiquitinyl-[E2 ubiquitin-conjugating enzyme]-L-cysteine + [acceptor protein]-L-lysine = [E2 ubiquitin-conjugating enzyme]-L-cysteine + N(6)-ubiquitinyl-[acceptor protein]-L-lysine.. It functions in the pathway protein modification; protein ubiquitination. In terms of biological role, probable E3 ubiquitin-protein ligase that may possess E3 ubiquitin ligase activity in vitro. In Arabidopsis thaliana (Mouse-ear cress), this protein is Probable E3 ubiquitin-protein ligase RHG1A.